A 424-amino-acid polypeptide reads, in one-letter code: Light-independent protochlorophyllide reductase subunit N (424 aa).

Positions 26, 51, and 112 each coordinate [4Fe-4S] cluster.

This sequence belongs to the BchN/ChlN family. In terms of assembly, protochlorophyllide reductase is composed of three subunits; BchL, BchN and BchB. Forms a heterotetramer of two BchB and two BchN subunits. [4Fe-4S] cluster serves as cofactor.

It carries out the reaction chlorophyllide a + oxidized 2[4Fe-4S]-[ferredoxin] + 2 ADP + 2 phosphate = protochlorophyllide a + reduced 2[4Fe-4S]-[ferredoxin] + 2 ATP + 2 H2O. The protein operates within porphyrin-containing compound metabolism; bacteriochlorophyll biosynthesis (light-independent). Component of the dark-operative protochlorophyllide reductase (DPOR) that uses Mg-ATP and reduced ferredoxin to reduce ring D of protochlorophyllide (Pchlide) to form chlorophyllide a (Chlide). This reaction is light-independent. The NB-protein (BchN-BchB) is the catalytic component of the complex. In Rhodobacter capsulatus (strain ATCC BAA-309 / NBRC 16581 / SB1003), this protein is Light-independent protochlorophyllide reductase subunit N.